The following is a 134-amino-acid chain: MSEKIEGIIDDLLNLEENAHGIAIIGKDGKIITQTENWNISNDLDKLNEFLNEKLALGKKGITSLSIQGIKYMIVENTEERKIGTNITGKGHVVICPIPIGGTGALITYVNPRAGPRDVLFNVQEYAKKLTDLI.

The interval 55–62 (LALGKKGI) is loki loop.

It belongs to the Asgard profilin family.

It localises to the cytoplasm. The protein localises to the cytoskeleton. With respect to regulation, inhibition of rabbit actin polymerization is reduced by phosphatidylinositol-(4,5)-P2(1,2-dipalmitoyl), a soluble form of the phospholipid phosphatidylinositol, suggesting an unknown lipid might regulate actin-profilin interaction in vivo. In terms of biological role, binds to actin and affects the structure of the cytoskeleton. At high concentrations inhibits spontaneous rabbit actin nucleation. This strongly suggests this archaea has a profilin-regulated actin system, and actin-type genes can be identified in this organism. This chain is Loki profilin-1, found in Lokiarchaeum sp. (strain GC14_75).